A 547-amino-acid chain; its full sequence is CTP synthase (547 aa).

Positions 1–265 (MARYIFITGG…DQAVLDAFQI (265 aa)) are amidoligase domain. CTP is bound at residue serine 13. Serine 13 contributes to the UTP binding site. Residues 14-19 (SLGKGL) and aspartate 71 each bind ATP. Mg(2+)-binding residues include aspartate 71 and glutamate 139. CTP-binding positions include 146 to 148 (DIE), 186 to 191 (KTKPTQ), and lysine 222. UTP contacts are provided by residues 186 to 191 (KTKPTQ) and lysine 222. The region spanning 291–546 (RIAVVGKYTQ…IRAAMDNERL (256 aa)) is the Glutamine amidotransferase type-1 domain. Glycine 352 contacts L-glutamine. Catalysis depends on cysteine 379, which acts as the Nucleophile; for glutamine hydrolysis. L-glutamine contacts are provided by residues 380 to 383 (LGMQ), glutamate 403, and arginine 474. Catalysis depends on residues histidine 519 and glutamate 521.

Belongs to the CTP synthase family. Homotetramer.

It carries out the reaction UTP + L-glutamine + ATP + H2O = CTP + L-glutamate + ADP + phosphate + 2 H(+). It catalyses the reaction L-glutamine + H2O = L-glutamate + NH4(+). The enzyme catalyses UTP + NH4(+) + ATP = CTP + ADP + phosphate + 2 H(+). The protein operates within pyrimidine metabolism; CTP biosynthesis via de novo pathway; CTP from UDP: step 2/2. With respect to regulation, allosterically activated by GTP, when glutamine is the substrate; GTP has no effect on the reaction when ammonia is the substrate. The allosteric effector GTP functions by stabilizing the protein conformation that binds the tetrahedral intermediate(s) formed during glutamine hydrolysis. Inhibited by the product CTP, via allosteric rather than competitive inhibition. In terms of biological role, catalyzes the ATP-dependent amination of UTP to CTP with either L-glutamine or ammonia as the source of nitrogen. Regulates intracellular CTP levels through interactions with the four ribonucleotide triphosphates. The chain is CTP synthase from Paracoccus denitrificans (strain Pd 1222).